Consider the following 189-residue polypeptide: TATA-box-binding protein 1 (189 aa).

2 tandem repeats follow at residues 10–86 and 101–179.

The protein belongs to the TBP family.

In terms of biological role, general factor that plays a role in the activation of archaeal genes transcribed by RNA polymerase. Binds specifically to the TATA box promoter element which lies close to the position of transcription initiation. In Haloferax volcanii (strain ATCC 29605 / DSM 3757 / JCM 8879 / NBRC 14742 / NCIMB 2012 / VKM B-1768 / DS2) (Halobacterium volcanii), this protein is TATA-box-binding protein 1 (tbp1).